The chain runs to 459 residues: Interleukin-7 receptor subunit alpha (459 aa).

An N-terminal signal peptide occupies residues 1–20 (MMALGRAFAIVFCLIQAVSG). The Extracellular portion of the chain corresponds to 21–239 (ESGNAQDGDL…PEPKNQGGWD (219 aa)). The cysteines at positions 42 and 57 are disulfide-linked. Asparagine 60 is a glycosylation site (N-linked (GlcNAc...) asparagine). Intrachain disulfides connect cysteine 74-cysteine 82 and cysteine 108-cysteine 118. Residues asparagine 115 and asparagine 177 are each glycosylated (N-linked (GlcNAc...) asparagine). The 102-residue stretch at 131–232 (APSDLKVVYR…PSSTFETPEP (102 aa)) folds into the Fibronectin type-III domain. The short motif at 218–222 (WSEWS) is the WSXWS motif element. Residues 240–264 (PVLPSVTILSLFSVFLLVILAHVLW) form a helical membrane-spanning segment. Over 265–459 (KKRIKPVVWP…VTMSSFYQNK (195 aa)) the chain is Cytoplasmic. Residues 272 to 280 (VWPSLPDHK) carry the Box 1 motif motif. At threonine 282 the chain carries Phosphothreonine; by PKC. Disordered stretches follow at residues 337–365 (TQGHRAAVHSANRSPETSVSPPETVRRES) and 378–413 (NAPPLLSSRSPDYRDGDRNRPPVYQDLLPNSGNTNV). Residues 347-357 (ANRSPETSVSP) show a composition bias toward polar residues. Residues 388–397 (PDYRDGDRNR) are compositionally biased toward basic and acidic residues.

Belongs to the type I cytokine receptor family. Type 4 subfamily. As to quaternary structure, the IL7 receptor is a heterodimer of IL7R and IL2RG. The TSLP receptor is a heterodimer of CRLF2 and IL7R. Interacts with CD53. Post-translationally, N-glycosylated IL-7Ralpha binds IL7 300-fold more tightly than the unglycosylated form. In terms of processing, ubiquitinated by MARCHF8; leading to lysosomal degradation. As to expression, spleen, thymus and fetal liver.

It is found in the membrane. In terms of biological role, receptor for interleukin-7. Also acts as a receptor for thymic stromal lymphopoietin (TSLP). The polypeptide is Interleukin-7 receptor subunit alpha (Il7r) (Mus musculus (Mouse)).